Reading from the N-terminus, the 425-residue chain is Enolase (425 aa).

A (2R)-2-phosphoglycerate-binding site is contributed by glutamine 162. Catalysis depends on glutamate 204, which acts as the Proton donor. Residues aspartate 241, glutamate 282, and aspartate 309 each coordinate Mg(2+). (2R)-2-phosphoglycerate is bound by residues lysine 334, arginine 363, serine 364, and lysine 385. Lysine 334 serves as the catalytic Proton acceptor.

Belongs to the enolase family. It depends on Mg(2+) as a cofactor.

The protein resides in the cytoplasm. It is found in the secreted. Its subcellular location is the cell surface. It carries out the reaction (2R)-2-phosphoglycerate = phosphoenolpyruvate + H2O. The protein operates within carbohydrate degradation; glycolysis; pyruvate from D-glyceraldehyde 3-phosphate: step 4/5. Its function is as follows. Catalyzes the reversible conversion of 2-phosphoglycerate (2-PG) into phosphoenolpyruvate (PEP). It is essential for the degradation of carbohydrates via glycolysis. In Micrococcus luteus (strain ATCC 4698 / DSM 20030 / JCM 1464 / CCM 169 / CCUG 5858 / IAM 1056 / NBRC 3333 / NCIMB 9278 / NCTC 2665 / VKM Ac-2230) (Micrococcus lysodeikticus), this protein is Enolase.